We begin with the raw amino-acid sequence, 512 residues long: Extracellular serine/threonine protein kinase CeFam20 (512 aa).

The Cytoplasmic portion of the chain corresponds to 1–6 (MRCNIK). Residues 7 to 26 (RLFTLAIGVFAATLVIISFS) form a helical; Signal-anchor for type II membrane protein membrane-spanning segment. Over 27–512 (KDNYEREWKQ…QDKKDDKKTV (486 aa)) the chain is Lumenal. A disulfide bridge links Cys110 with Cys144. The N-linked (GlcNAc...) asparagine glycan is linked to Asn113. Positions 176, 192, and 213 each coordinate ATP. Glu213 is a binding site for Mn(2+). N-linked (GlcNAc...) asparagine glycosylation is present at Asn242. Disulfide bonds link Cys268–Cys284 and Cys273–Cys277. 295-298 (QVFL) provides a ligand contact to ATP. 2 cysteine pairs are disulfide-bonded: Cys333/Cys409 and Cys410/Cys469. Residue Asp366 is part of the active site. Glu371 and Asp387 together coordinate ATP. Asp387 provides a ligand contact to Mn(2+). The interval 486–512 (PDVSDAEQNDEEQSEEHQDKKDDKKTV) is disordered. Residues 489–499 (SDAEQNDEEQS) show a composition bias toward acidic residues. The span at 500-512 (EEHQDKKDDKKTV) shows a compositional bias: basic and acidic residues.

It belongs to the FAM20 family. The cofactor is Mn(2+).

The protein resides in the golgi apparatus membrane. It localises to the secreted. It carries out the reaction L-seryl-[protein] + ATP = O-phospho-L-seryl-[protein] + ADP + H(+). The enzyme catalyses L-threonyl-[protein] + ATP = O-phospho-L-threonyl-[protein] + ADP + H(+). Golgi serine/threonine protein kinase that phosphorylates secretory pathway proteins within Ser-x-Glu/pSer motifs. The polypeptide is Extracellular serine/threonine protein kinase CeFam20 (Caenorhabditis elegans).